Reading from the N-terminus, the 90-residue chain is Small ribosomal subunit protein uS17 (90 aa).

Belongs to the universal ribosomal protein uS17 family. In terms of assembly, part of the 30S ribosomal subunit.

Its function is as follows. One of the primary rRNA binding proteins, it binds specifically to the 5'-end of 16S ribosomal RNA. The chain is Small ribosomal subunit protein uS17 from Paraburkholderia phymatum (strain DSM 17167 / CIP 108236 / LMG 21445 / STM815) (Burkholderia phymatum).